A 272-amino-acid polypeptide reads, in one-letter code: 2-succinyl-6-hydroxy-2,4-cyclohexadiene-1-carboxylate synthase (272 aa).

It belongs to the AB hydrolase superfamily. MenH family. In terms of assembly, monomer.

The enzyme catalyses 5-enolpyruvoyl-6-hydroxy-2-succinyl-cyclohex-3-ene-1-carboxylate = (1R,6R)-6-hydroxy-2-succinyl-cyclohexa-2,4-diene-1-carboxylate + pyruvate. It participates in quinol/quinone metabolism; 1,4-dihydroxy-2-naphthoate biosynthesis; 1,4-dihydroxy-2-naphthoate from chorismate: step 3/7. The protein operates within quinol/quinone metabolism; menaquinone biosynthesis. In terms of biological role, catalyzes a proton abstraction reaction that results in 2,5-elimination of pyruvate from 2-succinyl-5-enolpyruvyl-6-hydroxy-3-cyclohexene-1-carboxylate (SEPHCHC) and the formation of 2-succinyl-6-hydroxy-2,4-cyclohexadiene-1-carboxylate (SHCHC). This is 2-succinyl-6-hydroxy-2,4-cyclohexadiene-1-carboxylate synthase from Yersinia pseudotuberculosis serotype O:1b (strain IP 31758).